The following is a 522-amino-acid chain: Maturase K (522 aa).

It belongs to the intron maturase 2 family. MatK subfamily.

The protein resides in the plastid. It localises to the chloroplast. Functionally, usually encoded in the trnK tRNA gene intron. Probably assists in splicing its own and other chloroplast group II introns. The polypeptide is Maturase K (Aristea glauca).